A 339-amino-acid polypeptide reads, in one-letter code: Glycerol-3-phosphate dehydrogenase [NAD(P)+] (339 aa).

4 residues coordinate NADPH: serine 15, tyrosine 16, histidine 36, and lysine 110. Sn-glycerol 3-phosphate contacts are provided by lysine 110, glycine 139, and threonine 141. Alanine 143 contacts NADPH. Lysine 195, aspartate 248, serine 258, arginine 259, and asparagine 260 together coordinate sn-glycerol 3-phosphate. The active-site Proton acceptor is lysine 195. NADPH is bound at residue arginine 259. NADPH contacts are provided by valine 283 and glutamate 285.

Belongs to the NAD-dependent glycerol-3-phosphate dehydrogenase family.

Its subcellular location is the cytoplasm. The enzyme catalyses sn-glycerol 3-phosphate + NAD(+) = dihydroxyacetone phosphate + NADH + H(+). It carries out the reaction sn-glycerol 3-phosphate + NADP(+) = dihydroxyacetone phosphate + NADPH + H(+). Its pathway is membrane lipid metabolism; glycerophospholipid metabolism. Functionally, catalyzes the reduction of the glycolytic intermediate dihydroxyacetone phosphate (DHAP) to sn-glycerol 3-phosphate (G3P), the key precursor for phospholipid synthesis. This chain is Glycerol-3-phosphate dehydrogenase [NAD(P)+], found in Klebsiella pneumoniae subsp. pneumoniae (strain ATCC 700721 / MGH 78578).